We begin with the raw amino-acid sequence, 311 residues long: Malate dehydrogenase (311 aa).

NAD(+) contacts are provided by residues 7–13 (GAAGGIG) and aspartate 34. Substrate-binding residues include arginine 81 and arginine 87. NAD(+) is bound by residues asparagine 94 and 117-119 (ITN). Asparagine 119 and arginine 153 together coordinate substrate. The Proton acceptor role is filled by histidine 177. Methionine 227 contributes to the NAD(+) binding site.

This sequence belongs to the LDH/MDH superfamily. MDH type 1 family. In terms of assembly, homodimer.

The catalysed reaction is (S)-malate + NAD(+) = oxaloacetate + NADH + H(+). Catalyzes the reversible oxidation of malate to oxaloacetate. The protein is Malate dehydrogenase of Haemophilus influenzae (strain PittGG).